Reading from the N-terminus, the 549-residue chain is Glucose-6-phosphate isomerase (549 aa).

Catalysis depends on E355, which acts as the Proton donor. Active-site residues include H386 and K514.

Belongs to the GPI family.

The protein localises to the cytoplasm. The enzyme catalyses alpha-D-glucose 6-phosphate = beta-D-fructose 6-phosphate. It functions in the pathway carbohydrate biosynthesis; gluconeogenesis. It participates in carbohydrate degradation; glycolysis; D-glyceraldehyde 3-phosphate and glycerone phosphate from D-glucose: step 2/4. Its function is as follows. Catalyzes the reversible isomerization of glucose-6-phosphate to fructose-6-phosphate. The polypeptide is Glucose-6-phosphate isomerase (Salmonella schwarzengrund (strain CVM19633)).